A 61-amino-acid chain; its full sequence is Small ribosomal subunit protein uS14B (61 aa).

Residues Cys-24, Cys-27, Cys-40, and Cys-43 each coordinate Zn(2+).

Belongs to the universal ribosomal protein uS14 family. Zinc-binding uS14 subfamily. In terms of assembly, part of the 30S ribosomal subunit. Contacts proteins S3 and S10. Zn(2+) is required as a cofactor.

Its function is as follows. Binds 16S rRNA, required for the assembly of 30S particles and may also be responsible for determining the conformation of the 16S rRNA at the A site. The sequence is that of Small ribosomal subunit protein uS14B from Saccharopolyspora erythraea (strain ATCC 11635 / DSM 40517 / JCM 4748 / NBRC 13426 / NCIMB 8594 / NRRL 2338).